The following is a 401-amino-acid chain: Elongation factor Tu, apicoplast (401 aa).

Residues 10–206 (KPHINIGTIG…ALDSYIPLPK (197 aa)) form the tr-type G domain. The tract at residues 19-26 (GHVDHGKT) is G1. Position 19–26 (19–26 (GHVDHGKT)) interacts with GTP. Position 26 (threonine 26) interacts with Mg(2+). The G2 stretch occupies residues 60-64 (GITIK). Positions 81 to 84 (DCPG) are G3. GTP is bound by residues 81-85 (DCPGH) and 136-139 (NKID). Positions 136 to 139 (NKID) are G4. The G5 stretch occupies residues 173–175 (SAL).

This sequence belongs to the TRAFAC class translation factor GTPase superfamily. Classic translation factor GTPase family. EF-Tu/EF-1A subfamily. As to quaternary structure, monomer.

The protein resides in the plastid. The protein localises to the apicoplast. The catalysed reaction is GTP + H2O = GDP + phosphate + H(+). In terms of biological role, GTP hydrolase that promotes the GTP-dependent binding of aminoacyl-tRNA to the A-site of ribosomes during protein biosynthesis. The protein is Elongation factor Tu, apicoplast (tufA) of Toxoplasma gondii.